The sequence spans 426 residues: MSAIVRIQAREVLDSRGNPTVEAEVYLDNGGMGRAIVPSGASTGEREAVELRDGGQRYGGKGVRKAVEHVNGEIQDALLGMEAEEQEHIDAALCALDGTENKARLGANAILSVSLATAHAAAHAAGQPLYRYIGGLGPLQLPVPMMNVINGGAHADNDVDMQEFMLIPAGAESFSEALQMGVEVFHSLKAVLQSRGLATTVGDEGGFAPNLPSNEAALELLMDAINKAGYQPGKDIWLGMDVASSEFYRDGRYHLASERRELDSAQFVDYLAALADRYPLISIEDGMDQNDWEGWITLTDRLGDRLQLVGDDIFVTNTTILREGIERGVANSILIKLNQIGTLSETLAAIEMAKVHSYTAIVSHRSGETEDTTLADVAVATGCGQIKTGSLSRTDRVAKYNRLLRIEEDLGDAARYPGLATFYNLD.

Glutamine 162 serves as a coordination point for (2R)-2-phosphoglycerate. Glutamate 204 serves as the catalytic Proton donor. 3 residues coordinate Mg(2+): aspartate 241, glutamate 284, and aspartate 311. Residues lysine 336, arginine 365, serine 366, and lysine 387 each coordinate (2R)-2-phosphoglycerate. The active-site Proton acceptor is lysine 336.

It belongs to the enolase family. Requires Mg(2+) as cofactor.

Its subcellular location is the cytoplasm. It localises to the secreted. The protein resides in the cell surface. It carries out the reaction (2R)-2-phosphoglycerate = phosphoenolpyruvate + H2O. It participates in carbohydrate degradation; glycolysis; pyruvate from D-glyceraldehyde 3-phosphate: step 4/5. In terms of biological role, catalyzes the reversible conversion of 2-phosphoglycerate (2-PG) into phosphoenolpyruvate (PEP). It is essential for the degradation of carbohydrates via glycolysis. The protein is Enolase of Acidithiobacillus ferrooxidans (strain ATCC 23270 / DSM 14882 / CIP 104768 / NCIMB 8455) (Ferrobacillus ferrooxidans (strain ATCC 23270)).